The chain runs to 212 residues: uncharacterized protein (212 aa).

This is an uncharacterized protein from Archaeoglobus fulgidus (strain ATCC 49558 / DSM 4304 / JCM 9628 / NBRC 100126 / VC-16).